The sequence spans 842 residues: Leucine--tRNA ligase (842 aa).

A 'HIGH' region motif is present at residues 44 to 55; the sequence is PYPSANGLHVGH. The 'KMSKS' region motif lies at 619-623; that stretch reads KMSKS. Residue Lys-622 participates in ATP binding.

The protein belongs to the class-I aminoacyl-tRNA synthetase family.

The protein resides in the cytoplasm. It carries out the reaction tRNA(Leu) + L-leucine + ATP = L-leucyl-tRNA(Leu) + AMP + diphosphate. This chain is Leucine--tRNA ligase, found in Borrelia turicatae (strain 91E135).